Here is a 511-residue protein sequence, read N- to C-terminus: V-type proton ATPase subunit B, brain isoform (511 aa).

Position 400 (R400) interacts with ATP.

This sequence belongs to the ATPase alpha/beta chains family. In terms of assembly, V-ATPase is a heteromultimeric enzyme made up of two complexes: the ATP-hydrolytic V1 complex and the proton translocation V0 complex. The V1 complex consists of three catalytic AB heterodimers that form a heterohexamer, three peripheral stalks each consisting of EG heterodimers, one central rotor including subunits D and F, and the regulatory subunits C and H. The proton translocation complex V0 consists of the proton transport subunit a, a ring of proteolipid subunits c9c'', rotary subunit d, subunits e and f, and the accessory subunits ATP6AP1/Ac45 and ATP6AP2/PRR.

Its subcellular location is the apical cell membrane. It localises to the melanosome. It is found in the cytoplasm. The protein resides in the cytoplasmic vesicle. The protein localises to the secretory vesicle. Its subcellular location is the synaptic vesicle membrane. It localises to the clathrin-coated vesicle membrane. Non-catalytic subunit of the V1 complex of vacuolar(H+)-ATPase (V-ATPase), a multisubunit enzyme composed of a peripheral complex (V1) that hydrolyzes ATP and a membrane integral complex (V0) that translocates protons. V-ATPase is responsible for acidifying and maintaining the pH of intracellular compartments and in some cell types, is targeted to the plasma membrane, where it is responsible for acidifying the extracellular environment. In renal intercalated cells, can partially compensate the lack of ATP6V1B1 and mediate secretion of protons (H+) into the urine under base-line conditions but not in conditions of acid load. In Pongo abelii (Sumatran orangutan), this protein is V-type proton ATPase subunit B, brain isoform (ATP6V1B2).